Consider the following 435-residue polypeptide: GTPase Obg (435 aa).

Residues 6–164 enclose the Obg domain; it reads ADFVDRVKIF…RWLELELKIL (159 aa). An OBG-type G domain is found at 165–335; that stretch reads ADVGLVGYPN…LVSKLASIVR (171 aa). GTP is bound by residues 171-178, 196-200, 217-220, 287-290, and 316-318; these read GYPNVGKS, FTTLI, DIPG, NKID, and SAV. S178 and T198 together coordinate Mg(2+). The OCT domain occupies 357–435; it reads RRLPEKFHLE…IGDFEFEYRE (79 aa).

Belongs to the TRAFAC class OBG-HflX-like GTPase superfamily. OBG GTPase family. In terms of assembly, monomer. Mg(2+) serves as cofactor.

Its subcellular location is the cytoplasm. Functionally, an essential GTPase which binds GTP, GDP and possibly (p)ppGpp with moderate affinity, with high nucleotide exchange rates and a fairly low GTP hydrolysis rate. Plays a role in control of the cell cycle, stress response, ribosome biogenesis and in those bacteria that undergo differentiation, in morphogenesis control. The sequence is that of GTPase Obg from Thermotoga petrophila (strain ATCC BAA-488 / DSM 13995 / JCM 10881 / RKU-1).